A 64-amino-acid polypeptide reads, in one-letter code: Palmitoyl-CoA hydrolase (64 aa).

It belongs to the type-B carboxylesterase/lipase family. As to quaternary structure, monomer and homotrimer.

The protein localises to the microsome. It localises to the endoplasmic reticulum. It catalyses the reaction hexadecanoyl-CoA + H2O = hexadecanoate + CoA + H(+). Its function is as follows. Hydrolysis of a variety of CoA thioesters of long-chain fatty acids. The protein is Palmitoyl-CoA hydrolase of Rattus norvegicus (Rat).